The chain runs to 244 residues: Vesicle-associated membrane protein-associated protein SCS2 (244 aa).

An N-acetylserine modification is found at S2. Residues S2–E222 are Cytoplasmic-facing. An MSP domain is found at A3–L126. The residue at position 106 (S106) is a Phosphoserine. Residues Q135 to A219 are disordered. A compositionally biased stretch (basic and acidic residues) spans S153 to P168. The segment covering Q199–I211 has biased composition (polar residues). Residues S223 to Y243 traverse the membrane as a helical; Anchor for type IV membrane protein segment. Position 244 (R244) is a topological domain, lumenal.

The protein belongs to the VAMP-associated protein (VAP) (TC 9.B.17) family. In terms of assembly, interacts with OPI1. Also interacts with PBI1. Interacts with EPO1.

It localises to the endoplasmic reticulum membrane. The protein resides in the nucleus membrane. Acts as an endoplasmic reticulum (ER) membrane anchor for cytoplasmic proteins via binding to the FFAT motif of targeted proteins. Regulates phospholipid biosynthesis by modulating the subcellular localization of the transcriptional repressor OPI1. Also contributes to the tethering of the ER to the plasma membrane. Allows interorganelle phosphatidylserine (PtdSer) transport via a process that involves the acceptor membrane complex PDR17-PDS2 that binds to PBI1 which in turn ligates to SCS2 and phosphatidic acid present in the donor membrane, forming a zone of apposition that facilitates PtdSer transfer. The protein is Vesicle-associated membrane protein-associated protein SCS2 of Saccharomyces cerevisiae (strain ATCC 204508 / S288c) (Baker's yeast).